The chain runs to 365 residues: tRNA-specific 2-thiouridylase MnmA (365 aa).

ATP contacts are provided by residues 6–13 (AMSGGVDS) and M32. C101 acts as the Nucleophile in catalysis. Cysteines 101 and 199 form a disulfide. G125 lines the ATP pocket. Residues 148–150 (KDQ) are interaction with tRNA. Residue C199 is the Cysteine persulfide intermediate of the active site.

Belongs to the MnmA/TRMU family.

Its subcellular location is the cytoplasm. The enzyme catalyses S-sulfanyl-L-cysteinyl-[protein] + uridine(34) in tRNA + AH2 + ATP = 2-thiouridine(34) in tRNA + L-cysteinyl-[protein] + A + AMP + diphosphate + H(+). In terms of biological role, catalyzes the 2-thiolation of uridine at the wobble position (U34) of tRNA, leading to the formation of s(2)U34. The sequence is that of tRNA-specific 2-thiouridylase MnmA from Kineococcus radiotolerans (strain ATCC BAA-149 / DSM 14245 / SRS30216).